Consider the following 414-residue polypeptide: 2,3-diketo-5-methylthiopentyl-1-phosphate enolase (414 aa).

Lys-99 (proton acceptor) is an active-site residue. Residues Lys-148, 174 to 177 (KDDE), His-265, Gly-338, and 360 to 361 (GG) each bind substrate. Positions 174, 176, and 177 each coordinate Mg(2+). Lys-174 carries the N6-carboxylysine modification.

The protein belongs to the RuBisCO large chain family. Type IV subfamily. In terms of assembly, homodimer. The cofactor is Mg(2+).

The catalysed reaction is 5-methylsulfanyl-2,3-dioxopentyl phosphate = 2-hydroxy-5-methylsulfanyl-3-oxopent-1-enyl phosphate. Its pathway is amino-acid biosynthesis; L-methionine biosynthesis via salvage pathway; L-methionine from S-methyl-5-thio-alpha-D-ribose 1-phosphate: step 3/6. Functionally, catalyzes the enolization of 2,3-diketo-5-methylthiopentyl-1-phosphate (DK-MTP-1-P) into 2-hydroxy-3-keto-5-methylthiopentenyl-1-phosphate (HK-MTPenyl-1-P). The chain is 2,3-diketo-5-methylthiopentyl-1-phosphate enolase from Bacillus cereus (strain G9842).